Here is a 100-residue protein sequence, read N- to C-terminus: Large ribosomal subunit protein bL21 (100 aa).

Belongs to the bacterial ribosomal protein bL21 family. In terms of assembly, part of the 50S ribosomal subunit. Contacts protein L20.

This protein binds to 23S rRNA in the presence of protein L20. In Mycoplasma mycoides subsp. mycoides SC (strain CCUG 32753 / NCTC 10114 / PG1), this protein is Large ribosomal subunit protein bL21.